The sequence spans 887 residues: MLSRLFRMHGLFVASHPWEVIVGTVTLTICMMSMNMFTGNNKICGWNYECPKFEEDVLSSDIIILTITRCIAILYIYFQFQNLRQLGSKYILGIAGLFTIFSSFVFSTVVIHFLDKELTGLNEALPFFLLLIDLSRASALAKFALSSNSQDEVRENIARGMAILGPTFTLDALVECLVIGVGTMSGVRQLEIMCCFGCMSVLANYFVFMTFFPACVSLVLELSRESREGRPIWQLSHFARVLEEEENKPNPVTQRVKMIMSLGLVLVHAHSRWIADPSPQNSTAEQAKVSLGLDEDVSKRIEPSVSLWQFYLSKMISMDIEQVITLSLAFLLAVKYIFFEQAETESTLSLKNPITSPVVTSKKAQDNCCRREPLLVRRNQKLSSVEEDPGANQERKVEVIKPLVVEAETTSRATFVLGASVASPPSALGTQEPGIELPIEPRPNEECLQILENAEKGAKFLSDAEIIQLVNAKHIPAYKLETLMETHERGVSIRRQLLSTKLAEPSSLQYLPYRDYNYSLVMGACCENVIGYMPIPVGVAGPLCLDGKEYQVPMATTEGCLVASTNRGCRAISLGGGASSRVLADGMTRGPVVRLPRACDSAEVKTWLETPEGFAVIKEAFDSTSRFARLQKLHVTMAGRNLYIRFQSRTGDAMGMNMISKGTEKALLKLQEFFPDMQILAVSGNYCTDKKPAAINWIEGRGKTVVCEAVIPAKVVREVLKTTTEAMVDVNINKNLVGSAMAGSIGGYNAHAANIVTAIYIACGQDAAQNVGSSNCITLMEASGPTNEDLYISCTMPSIEIGTVGGGTNLLPQQACLQMLGVQGACKDNPGENARQLARIVCGTVMAGELSLMAALAAGHLVRSHMVHNRSKINLQDLQGTCTKKAA.

Residues 1–9 lie on the Cytoplasmic side of the membrane; sequence MLSRLFRMH. A helical membrane pass occupies residues 10-39; it reads GLFVASHPWEVIVGTVTLTICMMSMNMFTG. At 40–56 the chain is on the lumenal side; the sequence is NNKICGWNYECPKFEED. A helical membrane pass occupies residues 57–78; it reads VLSSDIIILTITRCIAILYIYF. The SSD domain occupies 61–218; the sequence is DIIILTITRC…MTFFPACVSL (158 aa). Residues 75-78 carry the INSIG-binding motif motif; the sequence is YIYF. The Cytoplasmic segment spans residues 79–89; that stretch reads QFQNLRQLGSK. Residue Lys-89 forms a Glycyl lysine isopeptide (Lys-Gly) (interchain with G-Cter in ubiquitin) linkage. Residues 90 to 114 traverse the membrane as a helical segment; it reads YILGIAGLFTIFSSFVFSTVVIHFL. Residues 115-123 are Lumenal-facing; the sequence is DKELTGLNE. The chain crosses the membrane as a helical span at residues 124–149; it reads ALPFFLLLIDLSRASALAKFALSSNS. Topologically, residues 150–159 are cytoplasmic; it reads QDEVRENIAR. Residues 160 to 187 form a helical membrane-spanning segment; it reads GMAILGPTFTLDALVECLVIGVGTMSGV. Residues 188 to 191 lie on the Lumenal side of the membrane; sequence RQLE. A helical transmembrane segment spans residues 192-220; that stretch reads IMCCFGCMSVLANYFVFMTFFPACVSLVL. Over 221–248 the chain is Cytoplasmic; the sequence is ELSRESREGRPIWQLSHFARVLEEEENK. Residue Lys-248 forms a Glycyl lysine isopeptide (Lys-Gly) (interchain with G-Cter in ubiquitin) linkage. Residues 249-275 traverse the membrane as a helical segment; the sequence is PNPVTQRVKMIMSLGLVLVHAHSRWIA. Topologically, residues 276 to 314 are lumenal; it reads DPSPQNSTAEQAKVSLGLDEDVSKRIEPSVSLWQFYLSK. An N-linked (GlcNAc...) asparagine glycan is attached at Asn-281. The chain crosses the membrane as a helical span at residues 315 to 339; it reads MISMDIEQVITLSLAFLLAVKYIFF. At 340–887 the chain is on the cytoplasmic side; it reads EQAETESTLS…LQGTCTKKAA (548 aa). Residues Glu-558, Lys-690, and Asp-766 each act as charge relay system in the active site. The Proton donor role is filled by His-865. Phosphoserine is present on Ser-871.

The protein belongs to the HMG-CoA reductase family. As to quaternary structure, homotetramer. Homodimer. Interacts (via its SSD) with INSIG1; the interaction, accelerated by sterols, leads to the recruitment of HMGCR to AMFR/gp78 for its ubiquitination by the sterol-mediated ERAD pathway. Interacts with UBIAD1. In terms of processing, undergoes sterol-mediated ubiquitination and ER-associated degradation (ERAD). Accumulation of sterols in the endoplasmic reticulum (ER) membrane, triggers binding of the reductase to the ER membrane protein INSIG1 or INSIG2. The INSIG1 binding leads to the recruitment of the ubiquitin ligase, AMFR/gp78, RNF139 or RNF145, initiating ubiquitination of the reductase. The ubiquitinated reductase is then extracted from the ER membrane and delivered to cytosolic 26S proteosomes by a mechanism probably mediated by the ATPase Valosin-containing protein VCP/p97. The INSIG2-binding leads to the recruitment of the ubiquitin ligase RNF139, initiating ubiquitination of the reductase. Lys-248 is the main site of ubiquitination. Ubiquitination is enhanced by the presence of a geranylgeranylated protein. Post-translationally, N-glycosylated. Deglycosylated by NGLY1 on release from the endoplasmic reticulum (ER) in a sterol-mediated manner. Phosphorylated. Phosphorylation at Ser-871 reduces the catalytic activity.

The protein localises to the endoplasmic reticulum membrane. The protein resides in the peroxisome membrane. It carries out the reaction (R)-mevalonate + 2 NADP(+) + CoA = (3S)-3-hydroxy-3-methylglutaryl-CoA + 2 NADPH + 2 H(+). Its pathway is metabolic intermediate biosynthesis; (R)-mevalonate biosynthesis; (R)-mevalonate from acetyl-CoA: step 3/3. With respect to regulation, regulated by a negative feedback mechanism through sterols and non-sterol metabolites derived from mevalonate. Phosphorylation at Ser-871 down-regulates the catalytic activity. Functionally, catalyzes the conversion of (3S)-hydroxy-3-methylglutaryl-CoA (HMG-CoA) to mevalonic acid, the rate-limiting step in the synthesis of cholesterol and other isoprenoids, thus plays a critical role in cellular cholesterol homeostasis. The chain is 3-hydroxy-3-methylglutaryl-coenzyme A reductase (Hmgcr) from Mus musculus (Mouse).